Here is a 492-residue protein sequence, read N- to C-terminus: Catalase isozyme 3 (492 aa).

Catalysis depends on residues H65 and N138. A heme-binding site is contributed by Y347.

It belongs to the catalase family. In terms of assembly, homotetramer. The cofactor is heme. Abundant in green cotyledons, etiolated cotyledons, green hypocotyl and root, but not in young leaf.

The protein localises to the peroxisome. The enzyme catalyses 2 H2O2 = O2 + 2 H2O. In terms of biological role, occurs in almost all aerobically respiring organisms and serves to protect cells from the toxic effects of hydrogen peroxide. The polypeptide is Catalase isozyme 3 (CAT3) (Cucurbita pepo (Vegetable marrow)).